Reading from the N-terminus, the 243-residue chain is Protein canopy homolog 3 (243 aa).

Residues 1–15 (MWFLFLLLPLWAGCA) form the signal peptide. In terms of domain architecture, Saposin B-type spans 27-236 (SKCEVCKYVA…KEEKKQMDQP (210 aa)). Intrachain disulfides connect Cys29/Cys188, Cys32/Cys176, and Cys86/Cys148. A coiled-coil region spans residues 136-160 (ETSAEVADMKKQCDVMMENYEEVIE). Residues 186 to 243 (QSCLSEQGDSRKGDTGPSTGTKKQKKQGEKKNKSKKQNSGSKEEKKQMDQPMAAKEEL) are disordered. The segment covering 226–243 (SKEEKKQMDQPMAAKEEL) has biased composition (basic and acidic residues).

It belongs to the canopy family.

It localises to the endoplasmic reticulum. Its function is as follows. Toll-like receptor (TLR)-specific co-chaperone for HSP90B1. Required for proper TLR folding and hence controls TLR exit from the endoplasmic reticulum. Consequently, required for immune responses. The sequence is that of Protein canopy homolog 3 (cnpy3) from Xenopus laevis (African clawed frog).